A 466-amino-acid chain; its full sequence is tRNA-2-methylthio-N(6)-dimethylallyladenosine synthase (466 aa).

The region spanning 2–118 (KRFYIHTIGC…LPGHIQAVAH (117 aa)) is the MTTase N-terminal domain. [4Fe-4S] cluster-binding residues include C11, C47, C81, C157, C161, and C164. One can recognise a Radical SAM core domain in the interval 143–372 (DSSGVTGFIT…LELQNRITAE (230 aa)). Residues 375–453 (RALEGRVEQV…AHSLSGIAVG (79 aa)) form the TRAM domain.

The protein belongs to the methylthiotransferase family. MiaB subfamily. In terms of assembly, monomer. Requires [4Fe-4S] cluster as cofactor.

It is found in the cytoplasm. The enzyme catalyses N(6)-dimethylallyladenosine(37) in tRNA + (sulfur carrier)-SH + AH2 + 2 S-adenosyl-L-methionine = 2-methylsulfanyl-N(6)-dimethylallyladenosine(37) in tRNA + (sulfur carrier)-H + 5'-deoxyadenosine + L-methionine + A + S-adenosyl-L-homocysteine + 2 H(+). Catalyzes the methylthiolation of N6-(dimethylallyl)adenosine (i(6)A), leading to the formation of 2-methylthio-N6-(dimethylallyl)adenosine (ms(2)i(6)A) at position 37 in tRNAs that read codons beginning with uridine. The sequence is that of tRNA-2-methylthio-N(6)-dimethylallyladenosine synthase from Desulfosudis oleivorans (strain DSM 6200 / JCM 39069 / Hxd3) (Desulfococcus oleovorans).